The following is a 451-amino-acid chain: Crh-like protein 2 (451 aa).

An N-terminal signal peptide occupies residues 1–21 (MQFNSLVLLAGATILSPFVQA). The region spanning 22–241 (QTWTTCNPLN…FTKVPFTMYV (220 aa)) is the GH16 domain. C27 and C34 are joined by a disulfide. N31, N43, N49, and N59 each carry an N-linked (GlcNAc...) asparagine glycan. E121 acts as the Nucleophile in catalysis. The Proton donor role is filled by E125. Residue E125 coordinates chitin. N-linked (GlcNAc...) asparagine glycosylation is found at N130, N143, and N165. Positions 206, 210, and 222 each coordinate chitin. The N-linked (GlcNAc...) asparagine glycan is linked to N273. The helical transmembrane segment at 305 to 325 (VYCGGGAAVAALVSAFLFTFL) threads the bilayer. N366 carries an N-linked (GlcNAc...) asparagine glycan.

It belongs to the glycosyl hydrolase 16 family. CRH1 subfamily. Forms homodimers as well as heterodimers with other crh protein members crh1 and crh3. Dimerization may be necessary for the transglycosylation activity.

The protein resides in the membrane. It catalyses the reaction Random endo-hydrolysis of N-acetyl-beta-D-glucosaminide (1-&gt;4)-beta-linkages in chitin and chitodextrins.. Dual chitinase/transglycosylase that plays a role in cell wall architecture. Chitinase and transglycosylase activities are coupled. Required for the polysaccharide cross-linking at the septa and the cell wall. More specifically, transfers chitin to 1,6-beta-glucan in the cell wall. This Botryotinia fuckeliana (strain B05.10) (Noble rot fungus) protein is Crh-like protein 2.